The following is a 432-amino-acid chain: Anaerobic glycerol-3-phosphate dehydrogenase subunit B (432 aa).

It belongs to the anaerobic G-3-P dehydrogenase subunit B family. In terms of assembly, composed of a catalytic GlpA/B dimer and of membrane bound GlpC. FMN serves as cofactor.

It carries out the reaction a quinone + sn-glycerol 3-phosphate = dihydroxyacetone phosphate + a quinol. The protein operates within polyol metabolism; glycerol degradation via glycerol kinase pathway; glycerone phosphate from sn-glycerol 3-phosphate (anaerobic route): step 1/1. In terms of biological role, conversion of glycerol 3-phosphate to dihydroxyacetone. Uses fumarate or nitrate as electron acceptor. The chain is Anaerobic glycerol-3-phosphate dehydrogenase subunit B from Haemophilus influenzae (strain PittEE).